Here is a 179-residue protein sequence, read N- to C-terminus: Peptide deformylase 2 (179 aa).

Fe cation-binding residues include cysteine 102 and histidine 144. Glutamate 145 is an active-site residue. Residue histidine 148 participates in Fe cation binding.

This sequence belongs to the polypeptide deformylase family. Fe(2+) serves as cofactor.

The catalysed reaction is N-terminal N-formyl-L-methionyl-[peptide] + H2O = N-terminal L-methionyl-[peptide] + formate. Functionally, removes the formyl group from the N-terminal Met of newly synthesized proteins. Requires at least a dipeptide for an efficient rate of reaction. N-terminal L-methionine is a prerequisite for activity but the enzyme has broad specificity at other positions. The polypeptide is Peptide deformylase 2 (Nostoc sp. (strain PCC 7120 / SAG 25.82 / UTEX 2576)).